We begin with the raw amino-acid sequence, 322 residues long: Arginase-1 (322 aa).

The segment at 1–27 is disordered; the sequence is MSFKSQSIGIIGAPFSKGQPRGGVEEG. S7 carries the post-translational modification Phosphoserine. K17 is subject to N6-succinyllysine. S72 carries the phosphoserine modification. An N6-succinyllysine modification is found at K75. Mn(2+) contacts are provided by H101, D124, H126, and D128. Substrate contacts are provided by residues 126–130 and 137–139; these read HTDIN and TGN. S163 is subject to Phosphoserine. Position 183 (D183) interacts with substrate. S217 carries the post-translational modification Phosphoserine. Mn(2+) contacts are provided by D232 and D234. Residues T246 and E277 each contribute to the substrate site.

It belongs to the arginase family. Homotrimer. Interacts with CMTM6. Mn(2+) serves as cofactor.

Its subcellular location is the cytoplasm. The enzyme catalyses L-arginine + H2O = urea + L-ornithine. It participates in nitrogen metabolism; urea cycle; L-ornithine and urea from L-arginine: step 1/1. The chain is Arginase-1 (ARG1) from Sus scrofa (Pig).